Reading from the N-terminus, the 469-residue chain is ATP synthase subunit beta (469 aa).

Residue 155–162 coordinates ATP; it reads GGAGCGKT.

This sequence belongs to the ATPase alpha/beta chains family. As to quaternary structure, F-type ATPases have 2 components, CF(1) - the catalytic core - and CF(0) - the membrane proton channel. CF(1) has five subunits: alpha(3), beta(3), gamma(1), delta(1), epsilon(1). CF(0) has three main subunits: a(1), b(2) and c(9-12). The alpha and beta chains form an alternating ring which encloses part of the gamma chain. CF(1) is attached to CF(0) by a central stalk formed by the gamma and epsilon chains, while a peripheral stalk is formed by the delta and b chains.

The protein resides in the cell inner membrane. The catalysed reaction is ATP + H2O + 4 H(+)(in) = ADP + phosphate + 5 H(+)(out). Functionally, produces ATP from ADP in the presence of a proton gradient across the membrane. The catalytic sites are hosted primarily by the beta subunits. The chain is ATP synthase subunit beta from Syntrophus aciditrophicus (strain SB).